Here is a 387-residue protein sequence, read N- to C-terminus: Na(+)/H(+) antiporter NhaA (387 aa).

A run of 12 helical transmembrane segments spans residues 16-36, 53-73, 89-109, 118-138, 147-167, 171-191, 197-217, 220-240, 251-271, 283-303, 321-341, and 354-374; these read AGGV…NSSI, IEHY…GLEL, LLPI…HMFF, GSGI…SLLG, VFLT…IAIF, GIDV…FILN, ILWP…HSGV, TITG…PDSI, PVAF…IIDS, IGIF…FCAI, VIGV…ITLL, and IAIM…LKMT.

The protein belongs to the NhaA Na(+)/H(+) (TC 2.A.33) antiporter family.

It is found in the cell inner membrane. The enzyme catalyses Na(+)(in) + 2 H(+)(out) = Na(+)(out) + 2 H(+)(in). Functionally, na(+)/H(+) antiporter that extrudes sodium in exchange for external protons. The protein is Na(+)/H(+) antiporter NhaA of Cytophaga hutchinsonii (strain ATCC 33406 / DSM 1761 / CIP 103989 / NBRC 15051 / NCIMB 9469 / D465).